The primary structure comprises 1133 residues: uncharacterized protein (1133 aa).

Disordered stretches follow at residues glutamine 33–serine 83, proline 305–serine 629, glycine 679–arginine 723, and isoleucine 736–valine 817. Residues asparagine 39–serine 83 are compositionally biased toward low complexity. The NDT80 DNA-binding region spans asparagine 40 to asparagine 308. The segment covering proline 305–proline 316 has biased composition (polar residues). Positions isoleucine 317–serine 384 are enriched in low complexity. A compositionally biased stretch (polar residues) spans isoleucine 401 to tyrosine 417. The span at asparagine 418–asparagine 452 shows a compositional bias: low complexity. Residues histidine 453–phenylalanine 470 are compositionally biased toward polar residues. Low complexity-rich tracts occupy residues asparagine 473–serine 615 and asparagine 686–asparagine 714. Polar residues predominate over residues isoleucine 736–threonine 747. Residues glutamine 757–glutamine 771 show a composition bias toward pro residues. Residues proline 772–proline 808 show a composition bias toward low complexity. In terms of domain architecture, Peptidase S74 spans serine 909–leucine 1020. The chain crosses the membrane as a helical span at residues isoleucine 1055 to isoleucine 1075. Residues serine 1107–lysine 1133 are disordered.

The protein resides in the membrane. This is an uncharacterized protein from Dictyostelium discoideum (Social amoeba).